The sequence spans 40 residues: Cell division inhibitor MciZ (40 aa).

Interacts with FtsZ. Binds to the C-terminal polymerization interface of FtsZ. Binds to FtsZ filaments.

With respect to regulation, highly effective in inhibiting polymerization at low and intermediate concentrations of GTP and only partially effective at high GTP concentrations. Blocks Z-ring formation in the mother cell during sporulation by inhibiting the polymerization of FtsZ. Binds to the minus end of FtsZ and functions as a filament-capping protein. At high concentrations, is capable of both capping and sequestration of FtsZ. Decreases the GTPase activity of FtsZ. The protein is Cell division inhibitor MciZ of Bacillus subtilis (strain 168).